The chain runs to 349 residues: MEFATVSPPDPGTAAAARARQDTLTKPRGALGRLEDLSVWIAACQGQCPPRQFERARVVVFAGDHGVARCGVSAYPPEVTAQMVANFDAGGAAINALAGVAGASVRVADLAVDADPPDDRIGAHKVRRGSGDITVQDALTAEETERALSAGAAIADEEVDAGADLLIAGDMGIGNTTAAAVLVAALTNVEPVVAVGFGTGIDDAGWARKTAAVRDALFRARRVLPDPVALLRCAGGADLAALAGFCAQAAVRRTPLLLDGMAVTAAALVAEHLAPGARLWWQAGHRSTEPGHALALTALDLEPILDLRMRLGEGTGAALALPIVRAAVAALSSMATFAQAGVSDPSAHP.

Positions 1-20 (MEFATVSPPDPGTAAAARAR) are disordered. Residue Glu-313 is the Proton acceptor of the active site.

It belongs to the CobT family.

It catalyses the reaction 5,6-dimethylbenzimidazole + nicotinate beta-D-ribonucleotide = alpha-ribazole 5'-phosphate + nicotinate + H(+). It functions in the pathway nucleoside biosynthesis; alpha-ribazole biosynthesis; alpha-ribazole from 5,6-dimethylbenzimidazole: step 1/2. Catalyzes the synthesis of alpha-ribazole-5'-phosphate from nicotinate mononucleotide (NAMN) and 5,6-dimethylbenzimidazole (DMB). The polypeptide is Nicotinate-nucleotide--dimethylbenzimidazole phosphoribosyltransferase (Mycolicibacterium paratuberculosis (strain ATCC BAA-968 / K-10) (Mycobacterium paratuberculosis)).